Here is a 480-residue protein sequence, read N- to C-terminus: Acetylxylan esterase (480 aa).

A signal peptide spans 1–19 (MNRKLFMTGLLMLAMTMQA).

The protein belongs to the AB hydrolase superfamily.

The catalysed reaction is Deacetylation of xylans and xylo-oligosaccharides.. It participates in glycan degradation; xylan degradation. Functionally, involved in degradation of plant cell wall polysaccharides. Is an acetyl esterase with broad substrate specificity, releasing acetic acid from acetylated xylo-oligosaccharides and acetylated xylan as well as xylose-tetraacetate, 4-O-methylumbelliferyl acetate, glucose-pentaacetate, and cephalosporin C. Appears to have greater activity on oligosaccharides than on polymeric substrates. Is also able to release acetic acid from xylo-oligosaccharides with 4-O-methylglucuronic acid side groups proximally located to O-acetyl esters. Preferentially targets xylo-oligosaccharides possessing three or more O-acetyl groups, but following their depletion it is active on the less acetylated portion of the substrate. This chain is Acetylxylan esterase, found in Xylanibacter ruminicola (strain ATCC 19189 / DSM 19721 / CIP 105475 / JCM 8958 / 23) (Prevotella ruminicola).